The following is a 1295-amino-acid chain: Nonribosomal peptide synthetase resC (1295 aa).

The segment at 1 to 24 (MDLTTTSHARVDSGGVPFTSSLND) is disordered. The adenylation stretch occupies residues 221-624 (KDVVDASPQA…EGRKDTQIKL (404 aa)). The Carrier domain occupies 759–836 (ESANPAEENL…DQANLLRPLV (78 aa)). Residue Ser-796 is modified to O-(pantetheine 4'-phosphoryl)serine. The segment at 873–1284 (EDVYPCTPYQ…DEYSQTLHEL (412 aa)) is condensation.

Belongs to the NRP synthetase family. The cofactor is pantetheine 4'-phosphate.

It carries out the reaction restrictinol + glycine + H(+) = restricticin + H2O. It functions in the pathway antifungal biosynthesis. Nonribosomal peptide synthetase; part of the gene cluster that mediates the biosynthesis of the tetrahydropyranyl antifungal agent restricticin that acts as an inhibitor of CYP51 and blocks the ergosterol biosynthesis. Within the pathway, resC catalyzes the C3 esterification of restrictinol with glycine to yield restricticin. ResC represents an example of the emerging class of single-module NRPS-like enzymes that perform esterification reactions. The highly reducing polyketide synthase resH, the short chain dehydrogenase resG, the cyclase resF, the FAD-dependent monooxygenase resA and the enoylreductase resD are required to generate the first stable intermediate desmethylrestrictinol. ResH with resD biosynthesize the first polyketide chain intermediate that is reduced by resG, followed by epoxidation by resA before 6-endo cyclization via epoxide opening by resF leads to desmethylrestrictinol. The methyltransferase resE then catalyzes the C4 O-methylation of desmethylrestrictinol to produce restrictinol, and the nonribosomal peptide synthetase resC catalyzes the C3 esterification of restrictinol with glycine that leads to restricticin. The sequence is that of Nonribosomal peptide synthetase resC from Aspergillus sclerotiorum.